The chain runs to 264 residues: Somatomedin-B and thrombospondin type-1 domain-containing protein (264 aa).

Positions 1 to 20 (MRTLWMALCVLARLWPGALA) are cleaved as a signal peptide. The region spanning 24–75 (DAGRCCPGRDPACFASGWRQDRVYGTCFCDQACRLTGDCCFDYARACPARPC) is the SMB domain. 7 disulfides stabilise this stretch: C28–C36, C28–C52, C36–C70, C50–C52, C50–C63, C56–C62, and C63–C70. The 54-residue stretch at 74–127 (PCIVGEWSPWSGCASQCRPTARVRRRAVQQEPQNGGEPCPALEERAGCLEYATP) folds into the TSP type-1 domain. The N-linked (GlcNAc...) asparagine glycan is linked to N227.

Belongs to the thrombospondin family.

The protein resides in the secreted. It localises to the extracellular space. The protein localises to the extracellular matrix. In Bos taurus (Bovine), this protein is Somatomedin-B and thrombospondin type-1 domain-containing protein (SBSPON).